The sequence spans 77 residues: Metallothionein-like protein type 2 (77 aa).

This sequence belongs to the metallothionein superfamily. Type 15 family. Expressed in the left, stem and flower, at very low levels in roots and is not detectable in mesophyll protoplasts.

Its function is as follows. Metallothioneins have a high content of cysteine residues that bind various heavy metals. The chain is Metallothionein-like protein type 2 (MTI) from Vicia faba (Broad bean).